A 116-amino-acid chain; its full sequence is Large ribosomal subunit protein bL19 (116 aa).

The protein belongs to the bacterial ribosomal protein bL19 family.

In terms of biological role, this protein is located at the 30S-50S ribosomal subunit interface and may play a role in the structure and function of the aminoacyl-tRNA binding site. The sequence is that of Large ribosomal subunit protein bL19 from Flavobacterium psychrophilum (strain ATCC 49511 / DSM 21280 / CIP 103535 / JIP02/86).